The sequence spans 397 residues: Phosphonopyruvate decarboxylase (397 aa).

The protein belongs to the TPP enzyme family. Thiamine diphosphate is required as a cofactor. It depends on Mg(2+) as a cofactor.

It carries out the reaction 3-phosphonopyruvate + H(+) = phosphonoacetaldehyde + CO2. Its pathway is secondary metabolite biosynthesis; bialaphos biosynthesis. Its function is as follows. Involved in the biosynthesis of phosphinothricin tripeptide (PTT), also known as bialaphos (BA), a natural-product antibiotic and potent herbicide. Catalyzes the decarboxylation of phosphonopyruvate (PnPy) to generate phosphonoacetaldehyde (PnAA). This is Phosphonopyruvate decarboxylase from Streptomyces viridochromogenes (strain DSM 40736 / JCM 4977 / BCRC 1201 / Tue 494).